Reading from the N-terminus, the 53-residue chain is Putative defensin-like protein 53 (53 aa).

Cystine bridges form between C12–C51, C16–C40, C26–C49, and C30–C50.

The protein belongs to the DEFL family.

This Arabidopsis thaliana (Mouse-ear cress) protein is Putative defensin-like protein 53.